Consider the following 371-residue polypeptide: Queuine tRNA-ribosyltransferase (371 aa).

The active-site Proton acceptor is Asp-90. Residues 90–94 (DSGGF), Asp-144, Gln-188, and Gly-215 contribute to the substrate site. The segment at 246-252 (GVGTPED) is RNA binding. Asp-265 serves as the catalytic Nucleophile. An RNA binding; important for wobble base 34 recognition region spans residues 270 to 274 (TRNAR). 4 residues coordinate Zn(2+): Cys-303, Cys-305, Cys-308, and His-334.

It belongs to the queuine tRNA-ribosyltransferase family. Homodimer. Within each dimer, one monomer is responsible for RNA recognition and catalysis, while the other monomer binds to the replacement base PreQ1. The cofactor is Zn(2+).

It carries out the reaction 7-aminomethyl-7-carbaguanine + guanosine(34) in tRNA = 7-aminomethyl-7-carbaguanosine(34) in tRNA + guanine. It functions in the pathway tRNA modification; tRNA-queuosine biosynthesis. Its function is as follows. Catalyzes the base-exchange of a guanine (G) residue with the queuine precursor 7-aminomethyl-7-deazaguanine (PreQ1) at position 34 (anticodon wobble position) in tRNAs with GU(N) anticodons (tRNA-Asp, -Asn, -His and -Tyr). Catalysis occurs through a double-displacement mechanism. The nucleophile active site attacks the C1' of nucleotide 34 to detach the guanine base from the RNA, forming a covalent enzyme-RNA intermediate. The proton acceptor active site deprotonates the incoming PreQ1, allowing a nucleophilic attack on the C1' of the ribose to form the product. After dissociation, two additional enzymatic reactions on the tRNA convert PreQ1 to queuine (Q), resulting in the hypermodified nucleoside queuosine (7-(((4,5-cis-dihydroxy-2-cyclopenten-1-yl)amino)methyl)-7-deazaguanosine). In Chromobacterium violaceum (strain ATCC 12472 / DSM 30191 / JCM 1249 / CCUG 213 / NBRC 12614 / NCIMB 9131 / NCTC 9757 / MK), this protein is Queuine tRNA-ribosyltransferase.